The chain runs to 806 residues: Putative phage-related protein YobO (806 aa).

The segment at 1–23 (MVHFKNCPDPSLNANSQSHPEFS) is disordered. The segment covering 12-21 (LNANSQSHPE) has biased composition (polar residues). PbH1 repeat units follow at residues 199–221 (VEYG…DITS), 237–259 (SRYI…TTHY), 260–292 (SEYI…EIDD), 294–315 (SRHV…EVKA), 419–441 (SQNI…DINL), and 448–470 (TDYI…SIGG).

In Bacillus subtilis (strain 168), this protein is Putative phage-related protein YobO (yobO).